We begin with the raw amino-acid sequence, 115 residues long: MKISRLGEAPDYRFSLANERTFLAWIRTALGFLAAGVGLDQLAPDFATPVIRELLALLLCLFSGGLAMYGYLRWLRNEKAMRLKEDLPYTNSLLIISLILMVVAVIVMGLVLYAG.

Residues 1–30 (MKISRLGEAPDYRFSLANERTFLAWIRTAL) lie on the Cytoplasmic side of the membrane. The chain crosses the membrane as a helical span at residues 31–51 (GFLAAGVGLDQLAPDFATPVI). Over 52-53 (RE) the chain is Periplasmic. Residues 54-74 (LLALLLCLFSGGLAMYGYLRW) traverse the membrane as a helical segment. Residues 75–92 (LRNEKAMRLKEDLPYTNS) lie on the Cytoplasmic side of the membrane. Residues 93–113 (LLIISLILMVVAVIVMGLVLY) traverse the membrane as a helical segment. At 114 to 115 (AG) the chain is on the periplasmic side.

This sequence to M.tuberculosis Rv2272.

The protein resides in the cell inner membrane. This is Inner membrane protein YidH (yidH) from Escherichia coli O157:H7.